A 1052-amino-acid polypeptide reads, in one-letter code: Error-prone DNA polymerase (1052 aa).

This sequence belongs to the DNA polymerase type-C family. DnaE2 subfamily.

The protein resides in the cytoplasm. The catalysed reaction is DNA(n) + a 2'-deoxyribonucleoside 5'-triphosphate = DNA(n+1) + diphosphate. In terms of biological role, DNA polymerase involved in damage-induced mutagenesis and translesion synthesis (TLS). It is not the major replicative DNA polymerase. This Bordetella bronchiseptica (strain ATCC BAA-588 / NCTC 13252 / RB50) (Alcaligenes bronchisepticus) protein is Error-prone DNA polymerase.